A 475-amino-acid polypeptide reads, in one-letter code: Ribulose bisphosphate carboxylase large chain (475 aa).

Residues 1–2 (MA) constitute a propeptide that is removed on maturation. Proline 3 bears the N-acetylproline mark. Positions 123 and 173 each coordinate substrate. Lysine 175 functions as the Proton acceptor in the catalytic mechanism. Position 177 (lysine 177) interacts with substrate. Positions 201, 203, and 204 each coordinate Mg(2+). At lysine 201 the chain carries N6-carboxylysine. Histidine 294 functions as the Proton acceptor in the catalytic mechanism. The substrate site is built by arginine 295, histidine 327, and serine 379.

This sequence belongs to the RuBisCO large chain family. Type I subfamily. Heterohexadecamer of 8 large chains and 8 small chains. Requires Mg(2+) as cofactor.

It is found in the plastid. The protein localises to the chloroplast. The enzyme catalyses 2 (2R)-3-phosphoglycerate + 2 H(+) = D-ribulose 1,5-bisphosphate + CO2 + H2O. It carries out the reaction D-ribulose 1,5-bisphosphate + O2 = 2-phosphoglycolate + (2R)-3-phosphoglycerate + 2 H(+). Functionally, ruBisCO catalyzes two reactions: the carboxylation of D-ribulose 1,5-bisphosphate, the primary event in carbon dioxide fixation, as well as the oxidative fragmentation of the pentose substrate in the photorespiration process. Both reactions occur simultaneously and in competition at the same active site. The chain is Ribulose bisphosphate carboxylase large chain from Ostreococcus tauri.